We begin with the raw amino-acid sequence, 68 residues long: Small cysteine-rich protein 5 (68 aa).

An N-terminal signal peptide occupies residues 1-24 (MAVKFHLCLLLIILVGMGAHVAFA).

This sequence belongs to the Cnidaria small cysteine-rich protein (SCRiP) family. gamma subfamily. Post-translationally, contains 4 disulfide bonds.

Its subcellular location is the secreted. The protein resides in the nematocyst. In terms of biological role, induces neurotoxic symptoms on zebrafish. Has also been claimed to be implied in calcification, but tests on homolog proteins suggest that proteins of this family have a neurotoxic function and not a calcification function. The sequence is that of Small cysteine-rich protein 5 from Orbicella faveolata (Mountainous star coral).